The following is a 609-amino-acid chain: UvrABC system protein C (609 aa).

The GIY-YIG domain maps to 16–94; sequence SSPGVYRMYD…IKQYMPKYNV (79 aa). The 36-residue stretch at 203–238 folds into the UVR domain; it reads QQVMSVLVQKMEQASSDMRYEQAALYRDQITALRRV.

This sequence belongs to the UvrC family. As to quaternary structure, interacts with UvrB in an incision complex.

It localises to the cytoplasm. The UvrABC repair system catalyzes the recognition and processing of DNA lesions. UvrC both incises the 5' and 3' sides of the lesion. The N-terminal half is responsible for the 3' incision and the C-terminal half is responsible for the 5' incision. This chain is UvrABC system protein C, found in Shewanella pealeana (strain ATCC 700345 / ANG-SQ1).